The primary structure comprises 297 residues: 33 kDa chaperonin (297 aa).

Cystine bridges form between cysteine 233–cysteine 235 and cysteine 267–cysteine 270.

This sequence belongs to the HSP33 family. Under oxidizing conditions two disulfide bonds are formed involving the reactive cysteines. Under reducing conditions zinc is bound to the reactive cysteines and the protein is inactive.

The protein resides in the cytoplasm. Its function is as follows. Redox regulated molecular chaperone. Protects both thermally unfolding and oxidatively damaged proteins from irreversible aggregation. Plays an important role in the bacterial defense system toward oxidative stress. This chain is 33 kDa chaperonin, found in Haemophilus ducreyi (strain 35000HP / ATCC 700724).